A 295-amino-acid chain; its full sequence is Ankyrin repeat and SOCS box protein 17 (295 aa).

One copy of the ANK repeat lies at 146–176 (SGITPLLYVAQTRQSNILKILLQYGILEREK). An SOCS box domain is found at 232–295 (LGRRPIISNW…RLQKYLNLES (64 aa)).

The protein belongs to the ankyrin SOCS box (ASB) family.

The protein operates within protein modification; protein ubiquitination. Its function is as follows. May be a substrate-recognition component of a SCF-like ECS (Elongin-Cullin-SOCS-box protein) E3 ubiquitin-protein ligase complex which mediates the ubiquitination and subsequent proteasomal degradation of target proteins. This is Ankyrin repeat and SOCS box protein 17 (ASB17) from Canis lupus familiaris (Dog).